The primary structure comprises 113 residues: UPF0342 protein SEQ_0993 (113 aa).

It belongs to the UPF0342 family.

In Streptococcus equi subsp. equi (strain 4047), this protein is UPF0342 protein SEQ_0993.